The chain runs to 1024 residues: Multidrug resistance protein MdtC (1024 aa).

Helical transmembrane passes span 15–35 (WLLT…LPVA), 333–353 (EVEQ…FAFL), 360–380 (LIPA…MYLC), 387–407 (LSLM…IVVL), 431–451 (VGFT…PLLL), 463–483 (FAIT…TLTP), 528–548 (WGLL…ISIP), 853–873 (LWLI…LYES), 897–917 (LFNA…IGIV), 953–973 (PIIM…LGSG), and 984–1004 (ITIV…TPVV).

The protein belongs to the resistance-nodulation-cell division (RND) (TC 2.A.6) family. MdtC subfamily. Part of a tripartite efflux system composed of MdtA, MdtB and MdtC. MdtC forms a heteromultimer with MdtB.

The protein resides in the cell inner membrane. The chain is Multidrug resistance protein MdtC from Erwinia tasmaniensis (strain DSM 17950 / CFBP 7177 / CIP 109463 / NCPPB 4357 / Et1/99).